A 364-amino-acid polypeptide reads, in one-letter code: GMP reductase (364 aa).

NADP(+)-binding positions include 26 to 27, Lys78, 132 to 134, and 183 to 184; these read SR, DVA, and IG. Residues Gly184, Gly186, and Cys189 each contribute to the K(+) site. The active-site Thioimidate intermediate is the Cys189. The active-site Proton donor/acceptor is the Thr191. Residue Arg192 participates in K(+) binding. GMP-binding positions include 222-224, 245-246, 271-273, and 289-293; these read DGG, GG, GMS, and RASEG. Residues Met272, 288–289, and 317–320 each bind NADP(+); these read YR and SACT.

Belongs to the IMPDH/GMPR family. GuaC type 1 subfamily. In terms of assembly, homotetramer.

The catalysed reaction is IMP + NH4(+) + NADP(+) = GMP + NADPH + 2 H(+). Its function is as follows. Catalyzes the irreversible NADPH-dependent deamination of GMP to IMP. It functions in the conversion of nucleobase, nucleoside and nucleotide derivatives of G to A nucleotides, and in maintaining the intracellular balance of A and G nucleotides. The chain is GMP reductase (gmr-1) from Onchocerca volvulus.